Consider the following 1175-residue polypeptide: Structural maintenance of chromosomes protein 2-1 (1175 aa).

Residues 2–1161 enclose the Zinc-hook domain; it reads HIKEICLEGF…NVLFRTKFVD (1160 aa). 32 to 39 provides a ligand contact to ATP; that stretch reads GLNGSGKS. The stretch at 172 to 508 forms a coiled coil; the sequence is RMYENKKEAA…AQLANFQFTY (337 aa). One can recognise an SMC hinge domain in the interval 518 to 638; the sequence is SKVKGVVAKL…KTTDVAKEVA (121 aa). The stretch at 673–1028 forms a coiled coil; it reads LRKLHDLAEA…ELDEKKKETL (356 aa).

The protein belongs to the SMC family. SMC2 subfamily. As to quaternary structure, forms a heterodimer with SMC4. Component of the condensin complex, which contains the SMC2 and SMC4 heterodimer, and three non SMC subunits that probably regulate the complex: CAPH, CAPD2 and CAPG. As to expression, highly expressed in roots and young floral buds.

The protein localises to the nucleus. In terms of biological role, central component of the condensin complex, a complex required for conversion of interphase chromatin into mitotic-like condense chromosomes. The condensin complex probably introduces positive supercoils into relaxed DNA in the presence of type I topoisomerases and converts nicked DNA into positive knotted forms in the presence of type II topoisomerases. Also involved in chromosome segregation in meiosis. The protein is Structural maintenance of chromosomes protein 2-1 (SMC2-1) of Arabidopsis thaliana (Mouse-ear cress).